Consider the following 516-residue polypeptide: Bifunctional pantoate ligase/cytidylate kinase (516 aa).

A pantoate--beta-alanine ligase region spans residues 1–279 (MVRKIFQTNA…CGSTRLIDHT (279 aa)). Residue 29 to 36 (MGGLHPGH) participates in ATP binding. His-36 functions as the Proton donor in the catalytic mechanism. Gln-64 provides a ligand contact to (R)-pantoate. Gln-64 contributes to the beta-alanine binding site. 153 to 156 (GEKD) is a binding site for ATP. Gln-159 is a (R)-pantoate binding site. 190–193 (YSSR) serves as a coordination point for ATP. The segment at 280 to 516 (FLMHRKPIIA…PEEVWPTPNS (237 aa)) is cytidylate kinase.

In the N-terminal section; belongs to the pantothenate synthetase family. It in the C-terminal section; belongs to the cytidylate kinase family. Type 1 subfamily.

The protein resides in the cytoplasm. The catalysed reaction is (R)-pantoate + beta-alanine + ATP = (R)-pantothenate + AMP + diphosphate + H(+). It catalyses the reaction CMP + ATP = CDP + ADP. The enzyme catalyses dCMP + ATP = dCDP + ADP. It participates in cofactor biosynthesis; (R)-pantothenate biosynthesis; (R)-pantothenate from (R)-pantoate and beta-alanine: step 1/1. In terms of biological role, catalyzes the condensation of pantoate with beta-alanine in an ATP-dependent reaction via a pantoyl-adenylate intermediate. Functionally, catalyzes the transfer of a phosphate group from ATP to either CMP or dCMP to form CDP or dCDP and ADP, respectively. The chain is Bifunctional pantoate ligase/cytidylate kinase from Prochlorococcus marinus (strain NATL2A).